Consider the following 192-residue polypeptide: Ion-translocating oxidoreductase complex subunit B (192 aa).

The hydrophobic stretch occupies residues 1–26; that stretch reads MNAIWIAVAAVSLLALAFGAILGYAS. Residues 32 to 91 enclose the 4Fe-4S domain; it reads EDDPVVEKIDEILPQSQCGQCGYPGCRPYAEAISCNGEKINRCAPGGEAVMLKIAELLNV. [4Fe-4S] cluster is bound by residues cysteine 49, cysteine 52, cysteine 57, cysteine 74, cysteine 117, cysteine 120, cysteine 123, cysteine 127, cysteine 147, cysteine 150, cysteine 153, and cysteine 157. 2 4Fe-4S ferredoxin-type domains span residues 108–137 and 138–167; these read MVAVIDENNCIGCTKCIQACPVDAIVGATR and AMHTVMSDLCTGCNLCVDPCPTHCISLQPV.

Belongs to the 4Fe4S bacterial-type ferredoxin family. RnfB subfamily. As to quaternary structure, the complex is composed of six subunits: RsxA, RsxB, RsxC, RsxD, RsxE and RsxG. [4Fe-4S] cluster is required as a cofactor.

The protein localises to the cell inner membrane. Part of a membrane-bound complex that couples electron transfer with translocation of ions across the membrane. Required to maintain the reduced state of SoxR. This Escherichia coli O81 (strain ED1a) protein is Ion-translocating oxidoreductase complex subunit B.